The chain runs to 229 residues: UPF0173 metal-dependent hydrolase SAB1566c (229 aa).

It belongs to the UPF0173 family.

The protein is UPF0173 metal-dependent hydrolase SAB1566c of Staphylococcus aureus (strain bovine RF122 / ET3-1).